A 303-amino-acid chain; its full sequence is Aspartate carbamoyltransferase catalytic subunit (303 aa).

Residues arginine 49 and threonine 50 each coordinate carbamoyl phosphate. Residue lysine 77 participates in L-aspartate binding. Carbamoyl phosphate contacts are provided by arginine 99, histidine 126, and glutamine 129. The L-aspartate site is built by arginine 159 and arginine 211. 2 residues coordinate carbamoyl phosphate: serine 252 and proline 253.

This sequence belongs to the aspartate/ornithine carbamoyltransferase superfamily. ATCase family. In terms of assembly, heterododecamer (2C3:3R2) of six catalytic PyrB chains organized as two trimers (C3), and six regulatory PyrI chains organized as three dimers (R2).

The enzyme catalyses carbamoyl phosphate + L-aspartate = N-carbamoyl-L-aspartate + phosphate + H(+). Its pathway is pyrimidine metabolism; UMP biosynthesis via de novo pathway; (S)-dihydroorotate from bicarbonate: step 2/3. In terms of biological role, catalyzes the condensation of carbamoyl phosphate and aspartate to form carbamoyl aspartate and inorganic phosphate, the committed step in the de novo pyrimidine nucleotide biosynthesis pathway. This Listeria welshimeri serovar 6b (strain ATCC 35897 / DSM 20650 / CCUG 15529 / CIP 8149 / NCTC 11857 / SLCC 5334 / V8) protein is Aspartate carbamoyltransferase catalytic subunit.